The primary structure comprises 194 residues: Large ribosomal subunit protein bL9 (194 aa).

Positions 165–194 (PEDAEEAVANEEEAEAALLDDEDADEYEQG) are disordered. Residues 166–194 (EDAEEAVANEEEAEAALLDDEDADEYEQG) are compositionally biased toward acidic residues.

Belongs to the bacterial ribosomal protein bL9 family.

Binds to the 23S rRNA. In Rhodospirillum rubrum (strain ATCC 11170 / ATH 1.1.1 / DSM 467 / LMG 4362 / NCIMB 8255 / S1), this protein is Large ribosomal subunit protein bL9.